We begin with the raw amino-acid sequence, 556 residues long: Interleukin-1 receptor-like 1 (556 aa).

Residues 1–18 (MGFWILAILTILMYSTAA) form the signal peptide. 2 Ig-like C2-type domains span residues 19–103 (KFSK…ANVT) and 114–197 (PDYL…VTAT). Residues 19-328 (KFSKQSWGLE…SRKNPIDHHS (310 aa)) are Extracellular-facing. Cys-36 and Cys-87 are oxidised to a cystine. Residues Asn-54, Asn-95, Asn-101, Asn-140, and Asn-191 are each glycosylated (N-linked (GlcNAc...) asparagine). Intrachain disulfides connect Cys-111-Cys-151 and Cys-133-Cys-181. The interval 198-211 (RSFTVKDEQGFSLF) is flexible linker. The region spanning 212–319 (PVIGAPAQNE…GLRRHTVRLS (108 aa)) is the Ig-like C2-type 3 domain. 3 N-linked (GlcNAc...) asparagine glycosylation sites follow: Asn-232, Asn-254, and Asn-273. 2 disulfides stabilise this stretch: Cys-235–Cys-303 and Cys-238–Cys-282. Residue Lys-321 forms a Glycyl lysine isopeptide (Lys-Gly) (interchain with G-Cter in ubiquitin) linkage. The chain crosses the membrane as a helical span at residues 329–349 (IYCIIAVCSVFLMLINVLVII). Topologically, residues 350 to 556 (LKMFWIEATL…SLTPLAAQKQ (207 aa)) are cytoplasmic. The TIR domain maps to 375 to 535 (KLYDAYVVYP…KFWKHVRYQM (161 aa)). Glu-461 is a catalytic residue.

Belongs to the interleukin-1 receptor family. Interacts with MYD88, IRAK1, IRAK4, and TRAF6. Bound to its ligand IL-33, interacts with IL1RAP to form the minimal interleukin-33 signaling complex with a 1:1:1 stoichiometry. Interacts with KIT (bound to KITLG/SCF). A mast cell-specific KITLG/SCF-induced interleukin-33 signaling complex contains IL1RL1, IL1RAP, KIT and MYD88. Interacts with TMED1. Post-translationally, ubiquitinated at Lys-321 in a FBXL19-mediated manner; leading to proteasomal degradation. Ubiquitination by TRAF6 via 'Lys-27'-linked polyubiquitination and deubiquitination by USP38 serves as a critical regulatory mechanism for fine-tuning IL1RL1-mediated inflammatory response. In terms of tissue distribution, highly expressed in kidney, lung, placenta, stomach, skeletal muscle, colon and small intestine. Isoform A is prevalently expressed in the lung, testis, placenta, stomach and colon. Isoform B is more abundant in the brain, kidney and the liver. Isoform C is not detected in brain, heart, liver, kidney and skeletal muscle. Expressed on T-cells in fibrotic liver; at protein level. Overexpressed in fibrotic and cirrhotic liver.

The protein resides in the cell membrane. It is found in the secreted. The enzyme catalyses NAD(+) + H2O = ADP-D-ribose + nicotinamide + H(+). Its function is as follows. Receptor for interleukin-33 (IL-33) which plays crucial roles in innate and adaptive immunity, contributing to tissue homeostasis and responses to environmental stresses together with coreceptor IL1RAP. Its stimulation recruits MYD88, IRAK1, IRAK4, and TRAF6, followed by phosphorylation of MAPK3/ERK1 and/or MAPK1/ERK2, MAPK14, and MAPK8. Possibly involved in helper T-cell function. Upon tissue injury, induces UCP2-dependent mitochondrial rewiring that attenuates the generation of reactive oxygen species and preserves the integrity of Krebs cycle required for persistent production of itaconate and subsequent GATA3-dependent differentiation of inflammation-resolving alternatively activated macrophages. Inhibits IL-33 signaling. The protein is Interleukin-1 receptor-like 1 (IL1RL1) of Homo sapiens (Human).